A 240-amino-acid polypeptide reads, in one-letter code: MDGFSALFVPSEPSVPGSQSVVPTCTGAFVSGKTQAQTPIPGPPPTLPSSSSVEDNSRRPAAGPFYLLRELPGLSDLTASINLILHYNLEHSFSKFCGKKVKEKLSNFLPDLPGMIDTPGTPDNSSLRSLIEKPPICGNAFTPLTGALLTGFRLHTGPLPEQCRLMHIQPPKKKNKKHKQSRTQEPAPPETPSDSDHRKKKKKQREDDPERRKKKKDKKKKKSRHSPEHPGAGSSQSGLR.

2 disordered regions span residues 32 to 58 and 169 to 240; these read GKTQ…DNSR and QPPK…SGLR. Basic residues-rich tracts occupy residues 170-181 and 212-224; these read PPKKKNKKHKQS and RKKK…KKSR.

Belongs to the Mediator complex subunit 19 family. As to quaternary structure, component of the Mediator complex.

It is found in the nucleus. Its function is as follows. Component of the Mediator complex, a coactivator involved in the regulated transcription of nearly all RNA polymerase II-dependent genes. Mediator functions as a bridge to convey information from gene-specific regulatory proteins to the basal RNA polymerase II transcription machinery. Mediator is recruited to promoters by direct interactions with regulatory proteins and serves as a scaffold for the assembly of a functional preinitiation complex with RNA polymerase II and the general transcription factors. The chain is Mediator of RNA polymerase II transcription subunit 19 (med19) from Xenopus laevis (African clawed frog).